A 345-amino-acid polypeptide reads, in one-letter code: Cysteinyl leukotriene receptor 2 (345 aa).

Residues 1–43 (MERKLMSLLPSISLSEMEPNSTLGNHNSNRSCTTENFKREFYP) are Extracellular-facing. Asn20 and Asn29 each carry an N-linked (GlcNAc...) asparagine glycan. The helical transmembrane segment at 44-64 (IVYLVIFIWGALGNGFSIYVF) threads the bilayer. The Cytoplasmic portion of the chain corresponds to 65 to 73 (LKPYKKSTS). A helical membrane pass occupies residues 74–94 (VNVFMLNLAISDLLFTITLPF). Over 95-124 (RVDYYLRGSNXIFGDTPCRIMSYSMYVNMY) the chain is Extracellular. Residues Cys112 and Cys188 are joined by a disulfide bond. The helical transmembrane segment at 125-145 (SSIYFLTVLSVVRFLATVHPF) threads the bilayer. Residues 146–154 (RLLHTTSIK) are Cytoplasmic-facing. A helical transmembrane segment spans residues 155 to 175 (NAWILCGVIWIFIMASSTVLL). Residues 176–205 (KNGSEQKDNVTLCLELNSNKVTKLKTMNYV) lie on the Extracellular side of the membrane. 2 N-linked (GlcNAc...) asparagine glycosylation sites follow: Asn177 and Asn184. The helical transmembrane segment at 206–226 (ALVVGFVLPFGTLSICYLLII) threads the bilayer. Over 227–246 (RALLKVEVPESGLRLSHRKA) the chain is Cytoplasmic. A helical transmembrane segment spans residues 247–267 (LITVIIALIIFLLCFLPYHVL). Over 268–287 (RTLHLLEWKADKCKDRLHKA) the chain is Extracellular. Residues 288–308 (VAVTLALAAANSCFNPFLYYF) form a helical membrane-spanning segment. At 309 to 345 (AGENFKDRLKSALRKGRPQKTRCGFSVCVWLKKETRV) the chain is on the cytoplasmic side.

The protein belongs to the G-protein coupled receptor 1 family.

The protein resides in the cell membrane. In terms of biological role, receptor for cysteinyl leukotrienes. The response is mediated via a G-protein that activates a phosphatidylinositol-calcium second messenger system. The sequence is that of Cysteinyl leukotriene receptor 2 (CYSLTR2) from Sus scrofa (Pig).